A 186-amino-acid chain; its full sequence is Small ribosomal subunit protein uS19 (186 aa).

The interval 1 to 95 (MREAIKRYGS…YEELYAQYKQ (95 aa)) is unknown. The interval 96-186 (MTEKKAYVDP…EKTAKVVKKK (91 aa)) is small ribosomal subunit protein uS19.

It belongs to the universal ribosomal protein uS19 family.

In terms of biological role, protein S19 forms a complex with S13 that binds strongly to the 16S ribosomal RNA. In Aquifex aeolicus (strain VF5), this protein is Small ribosomal subunit protein uS19.